A 95-amino-acid chain; its full sequence is Aspartyl/glutamyl-tRNA(Asn/Gln) amidotransferase subunit C (95 aa).

The protein belongs to the GatC family. Heterotrimer of A, B and C subunits.

The catalysed reaction is L-glutamyl-tRNA(Gln) + L-glutamine + ATP + H2O = L-glutaminyl-tRNA(Gln) + L-glutamate + ADP + phosphate + H(+). It catalyses the reaction L-aspartyl-tRNA(Asn) + L-glutamine + ATP + H2O = L-asparaginyl-tRNA(Asn) + L-glutamate + ADP + phosphate + 2 H(+). Functionally, allows the formation of correctly charged Asn-tRNA(Asn) or Gln-tRNA(Gln) through the transamidation of misacylated Asp-tRNA(Asn) or Glu-tRNA(Gln) in organisms which lack either or both of asparaginyl-tRNA or glutaminyl-tRNA synthetases. The reaction takes place in the presence of glutamine and ATP through an activated phospho-Asp-tRNA(Asn) or phospho-Glu-tRNA(Gln). In Marinobacter nauticus (strain ATCC 700491 / DSM 11845 / VT8) (Marinobacter aquaeolei), this protein is Aspartyl/glutamyl-tRNA(Asn/Gln) amidotransferase subunit C.